The primary structure comprises 676 residues: Methionine--tRNA ligase (676 aa).

The short motif at 15-25 (PYANGPIHLGH) is the 'HIGH' region element. Zn(2+) is bound by residues C146, C149, C159, and C162. The short motif at 332–336 (KMSKS) is the 'KMSKS' region element. K335 contacts ATP. Positions 575–676 (DFAKIDLRIA…EGAQPGMRVK (102 aa)) constitute a tRNA-binding domain.

Belongs to the class-I aminoacyl-tRNA synthetase family. MetG type 1 subfamily. Homodimer. Requires Zn(2+) as cofactor.

Its subcellular location is the cytoplasm. It carries out the reaction tRNA(Met) + L-methionine + ATP = L-methionyl-tRNA(Met) + AMP + diphosphate. Is required not only for elongation of protein synthesis but also for the initiation of all mRNA translation through initiator tRNA(fMet) aminoacylation. The sequence is that of Methionine--tRNA ligase from Shewanella sp. (strain MR-4).